The primary structure comprises 499 residues: Ethanolamine-phosphate phospho-lyase (499 aa).

At K278 the chain carries N6-(pyridoxal phosphate)lysine.

It belongs to the class-III pyridoxal-phosphate-dependent aminotransferase family. In terms of assembly, homotetramer. Pyridoxal 5'-phosphate is required as a cofactor.

It localises to the mitochondrion. It catalyses the reaction phosphoethanolamine + H2O = acetaldehyde + NH4(+) + phosphate. Its function is as follows. Catalyzes the pyridoxal-phosphate-dependent breakdown of phosphoethanolamine, converting it to ammonia, inorganic phosphate and acetaldehyde. The polypeptide is Ethanolamine-phosphate phospho-lyase (Etnppl) (Mus musculus (Mouse)).